A 209-amino-acid chain; its full sequence is Uracil phosphoribosyltransferase (209 aa).

Residues Arg79, Arg104, and Asp131 to Ser139 contribute to the 5-phospho-alpha-D-ribose 1-diphosphate site. Residues Val194 and Gly199–Ala201 each bind uracil. Asp200 provides a ligand contact to 5-phospho-alpha-D-ribose 1-diphosphate.

This sequence belongs to the UPRTase family. Requires Mg(2+) as cofactor.

The enzyme catalyses UMP + diphosphate = 5-phospho-alpha-D-ribose 1-diphosphate + uracil. The protein operates within pyrimidine metabolism; UMP biosynthesis via salvage pathway; UMP from uracil: step 1/1. Allosterically activated by GTP. In terms of biological role, catalyzes the conversion of uracil and 5-phospho-alpha-D-ribose 1-diphosphate (PRPP) to UMP and diphosphate. In Bacillus cereus (strain Q1), this protein is Uracil phosphoribosyltransferase.